The following is a 279-amino-acid chain: Movement protein (279 aa).

The disordered stretch occupies residues 246-279 (SESEELNVESPPAAIGSSSASRSEAFRPQVVNGL). The segment covering 254 to 268 (ESPPAAIGSSSASRS) has biased composition (low complexity).

Belongs to the cucumovirus movement protein family.

It localises to the host cell junction. It is found in the host plasmodesma. In terms of biological role, transports viral genome to neighboring plant cells directly through plasmosdesmata, without any budding. The movement protein allows efficient cell to cell propagation, by bypassing the host cell wall barrier. Acts by forming a tubular structure at the host plasmodesmata, enlarging it enough to allow free passage of virion capsids. The sequence is that of Movement protein from Cucumber mosaic virus (strain N) (CMV).